Consider the following 151-residue polypeptide: 3-dehydroquinate dehydratase (151 aa).

Catalysis depends on Tyr-24, which acts as the Proton acceptor. Positions 76, 82, and 89 each coordinate substrate. Catalysis depends on His-102, which acts as the Proton donor. Substrate is bound by residues 103-104 and Arg-113; that span reads LS.

It belongs to the type-II 3-dehydroquinase family. In terms of assembly, homododecamer.

It carries out the reaction 3-dehydroquinate = 3-dehydroshikimate + H2O. The protein operates within metabolic intermediate biosynthesis; chorismate biosynthesis; chorismate from D-erythrose 4-phosphate and phosphoenolpyruvate: step 3/7. Its function is as follows. Catalyzes a trans-dehydration via an enolate intermediate. This chain is 3-dehydroquinate dehydratase, found in Acinetobacter baumannii (strain ATCC 17978 / DSM 105126 / CIP 53.77 / LMG 1025 / NCDC KC755 / 5377).